A 188-amino-acid chain; its full sequence is Transmembrane protein 160 (188 aa).

Residues 1-96 (MGGGWWWARA…ISFMQSDMGR (96 aa)) constitute a mitochondrion transit peptide. Residues 24 to 52 (PPQRPRSGGARGSFAPGHGPRAGASPPPV) form a disordered region. Ser48 carries the post-translational modification Phosphoserine. 2 consecutive transmembrane segments (helical) span residues 102-122 (FFLL…VGLA) and 135-155 (AAVG…AVGL). The interval 168 to 188 (PEDDGTASAEGPDEAGRPPPE) is disordered.

It belongs to the TMEM160 family.

The protein localises to the mitochondrion inner membrane. The polypeptide is Transmembrane protein 160 (Homo sapiens (Human)).